Reading from the N-terminus, the 431-residue chain is Pheromone alpha factor receptor (431 aa).

The Extracellular segment spans residues 1–49; it reads MSDAAPSLSNLFYDPTYNPGQSTINYTSIYGNGSTITFDELQGLVNSTV. 2 N-linked (GlcNAc...) asparagine glycosylation sites follow: Asn25 and Asn32. A helical transmembrane segment spans residues 50 to 72; sequence TQAIMFGVRCGAAALTLIVMWMT. The Glycine zipper motif motif lies at 53-61; that stretch reads IMFGVRCGA. The Cytoplasmic segment spans residues 73–78; that stretch reads SRSRKT. A helical membrane pass occupies residues 79–102; it reads PIFIINQVSLFLIILHSALYFKYL. Residues 103-132 are Extracellular-facing; that stretch reads LSNYSSVTYALTGFPQFISRGDVHVYGATN. The helical transmembrane segment at 133 to 156 threads the bilayer; sequence IIQVLLVASIETSLVFQIKVIFTG. Over 157–163 the chain is Cytoplasmic; sequence DNFKRIG. Residues 164–188 form a helical membrane-spanning segment; sequence LMLTSISFTLGIATVTMYFVSAVKG. Residues 189–205 lie on the Extracellular side of the membrane; it reads MIVTYNDVSATQDKYFN. The chain crosses the membrane as a helical span at residues 206–230; that stretch reads ASTILLASSINFMSFVLVVKLILAI. At 231–241 the chain is on the cytoplasmic side; that stretch reads RSRRFLGLKQF. Residues 242–266 traverse the membrane as a helical segment; that stretch reads DSFHILLIMSCQSLLVPSIIFILAY. Over 267-275 the chain is Extracellular; it reads SLKPNQGTD. Residues 276–299 form a helical membrane-spanning segment; the sequence is VLTTVATLLAVLSLPLSSMWATAA. Topologically, residues 300-431 are cytoplasmic; it reads NNASKTNTIT…KFWTEDNNNL (132 aa). 2 positions are modified to phosphoserine: Ser310 and Ser315. Thr329 is subject to Phosphothreonine. Residue Ser331 is modified to Phosphoserine. A Glycyl lysine isopeptide (Lys-Gly) (interchain with G-Cter in ubiquitin) cross-link involves residue Lys337. A Phosphoserine modification is found at Ser360. Thr363 is modified (phosphothreonine). Ser366 is subject to Phosphoserine. A Glycyl lysine isopeptide (Lys-Gly) (interchain with G-Cter in ubiquitin) cross-link involves residue Lys374. The segment covering 379–389 has biased composition (polar residues); that stretch reads QLPTPTSSKNT. The interval 379–406 is disordered; the sequence is QLPTPTSSKNTRIGPFADASYKEGEVEP. Position 382 is a phosphothreonine (Thr382). Phosphoserine is present on residues Ser385 and Ser386. A Glycyl lysine isopeptide (Lys-Gly) (interchain with G-Cter in ubiquitin) cross-link involves residue Lys400. Residues Thr411 and Thr414 each carry the phosphothreonine modification. Lys422 is covalently cross-linked (Glycyl lysine isopeptide (Lys-Gly) (interchain with G-Cter in ubiquitin)).

It belongs to the G-protein coupled receptor 4 family. In terms of assembly, homodimer. Might also for higher order homooligomers such as homotetramers. Oligomerization is mediated significantly by transmembrane domain 1 (TMD1), possibly in concert with the N-terminal extracellular domain and TMD2. Interaction with GPA1, its dedicated G-alpha protein. In terms of processing, undergoes hyperphosphorylation of the C-terminal cytoplasmic domain after binding of the alpha-factor, which leads to internalization by endocytosis. Post-translationally, monoubiquitination at Lys-337 triggers internalization of STE2. N-glycosylated. N-glycosylation may be involved in the sorting process for misfolded STE2 protein. Expressed in MATa strains but not in MATalpha strains.

It localises to the cell membrane. In terms of biological role, fungal class D1 G-protein-coupled receptor that acts as an alpha-factor pheromone receptor performing pheromone-dependent signal transduction involved in cellular conjugation, mating projection assembly, and in cell fusion. Following alpha-factor-binding, the signal is transmitted via a tripartite G protein consisting of alpha-, beta- and gamma-subunits (GAP1, STE4 and STE8 respectively) that prepares the cell for conjugation. In the inactive state, the cytoplasmic end of transmembrane domain 7 (TMD7) is unstructured and packs between TMD1-6, blocking the G protein coupling site. Agonist binding results in the outward movement of the extracellular ends of TMD6 and TMD7 by 6 Angstroms. On the intracellular surface, the G protein coupling site is formed by a 20 Angstroms outward movement of the unstructured region in TMD7 that unblocks the site, and a 12 Angstroms inward movement of TMD6. The protein is Pheromone alpha factor receptor (STE2) of Saccharomyces cerevisiae (strain ATCC 204508 / S288c) (Baker's yeast).